The following is a 1198-amino-acid chain: Tetratricopeptide repeat protein 17 (1198 aa).

The stretch at 295-328 (FTSYYTLGNIYAMLGEYNHSVLCYDHALQAKPGF) is one TPR 1 repeat. Residues 340-382 (CQQKLEQKLEAQHRSLQRTLNELKEYQKQHDHYLRQQEILEKH) adopt a coiled-coil conformation. TPR repeat units lie at residues 619–652 (WLIL…APVQ) and 689–722 (PLTF…TTRC). Disordered stretches follow at residues 771–825 (PQSL…KSEE) and 903–924 (KKPK…QAEN). Residues 903–914 (KKPKGDHKKPPG) show a composition bias toward basic residues. TPR repeat units lie at residues 1071–1105 (SWVL…APHQ), 1108–1141 (DVPL…APHF), and 1142–1175 (AVNH…QPEF).

Belongs to the TTC17 family. In terms of assembly, interacts with CATIP. As to expression, expressed in germ cells as well as in somatic cells of the testis (at protein level). Ubiquitous.

It is found in the cytoplasm. Its subcellular location is the cell membrane. The protein localises to the cytoskeleton. Plays a role in primary ciliogenesis by modulating actin polymerization. This chain is Tetratricopeptide repeat protein 17 (Ttc17), found in Rattus norvegicus (Rat).